The sequence spans 252 residues: Putative zinc finger CCCH domain-containing protein 58 (252 aa).

A C3H1-type zinc finger spans residues 35–62 (NHKSVLCMKWREGRCHNGVACRYAHGEE). 3 disordered regions span residues 71-95 (RVGG…SGST), 109-180 (RHGR…SAAD), and 215-252 (TATS…APPK). Composition is skewed to low complexity over residues 133 to 149 (SARS…TTPP) and 229 to 238 (ITTTTSSSTT).

The chain is Putative zinc finger CCCH domain-containing protein 58 from Oryza sativa subsp. japonica (Rice).